The chain runs to 379 residues: RIB43A-like with coiled-coils protein 1 (379 aa).

Residues 1–21 (MYNINQSTDTKEAAAIEARRN) are disordered. Residues 9 to 21 (DTKEAAAIEARRN) show a composition bias toward basic and acidic residues. Coiled-coil stretches lie at residues 85–111 (ADRT…GREF), 161–241 (RYNL…KANL), and 280–304 (EQRA…QAEK).

It belongs to the RIB43A family. As to quaternary structure, microtubule inner protein component of sperm flagellar doublet microtubules.

It is found in the cytoplasm. Its subcellular location is the cytoskeleton. The protein localises to the flagellum axoneme. This Macaca fascicularis (Crab-eating macaque) protein is RIB43A-like with coiled-coils protein 1 (RIBC1).